Here is a 329-residue protein sequence, read N- to C-terminus: DNA-directed RNA polymerase subunit alpha (329 aa).

The segment at 1 to 235 (MQGSVTEFLK…EQLEAFVDLR (235 aa)) is alpha N-terminal domain (alpha-NTD). The alpha C-terminal domain (alpha-CTD) stretch occupies residues 249-329 (FDPILLRPVD…NWPPASIADE (81 aa)).

It belongs to the RNA polymerase alpha chain family. In terms of assembly, homodimer. The RNAP catalytic core consists of 2 alpha, 1 beta, 1 beta' and 1 omega subunit. When a sigma factor is associated with the core the holoenzyme is formed, which can initiate transcription.

It carries out the reaction RNA(n) + a ribonucleoside 5'-triphosphate = RNA(n+1) + diphosphate. In terms of biological role, DNA-dependent RNA polymerase catalyzes the transcription of DNA into RNA using the four ribonucleoside triphosphates as substrates. This chain is DNA-directed RNA polymerase subunit alpha, found in Cronobacter sakazakii (strain ATCC BAA-894) (Enterobacter sakazakii).